A 387-amino-acid chain; its full sequence is Putative glutamate--cysteine ligase 2 (387 aa).

Belongs to the glutamate--cysteine ligase type 2 family. YbdK subfamily.

The enzyme catalyses L-cysteine + L-glutamate + ATP = gamma-L-glutamyl-L-cysteine + ADP + phosphate + H(+). ATP-dependent carboxylate-amine ligase which exhibits weak glutamate--cysteine ligase activity. The protein is Putative glutamate--cysteine ligase 2 of Trichormus variabilis (strain ATCC 29413 / PCC 7937) (Anabaena variabilis).